The sequence spans 493 residues: Ketol-acid reductoisomerase (NADP(+)) (493 aa).

In terms of domain architecture, KARI N-terminal Rossmann spans 17–208 (LSQCRFMDRS…GGDRAGVLHS (192 aa)). NADP(+) contacts are provided by residues 45 to 48 (CGAQ), arginine 68, arginine 76, serine 78, and 108 to 110 (DKQ). Histidine 132 is an active-site residue. Glycine 158 contributes to the NADP(+) binding site. KARI C-terminal knotted domains are found at residues 209–344 (SFIA…NAPS) and 345–486 (SNEH…MKDM). 4 residues coordinate Mg(2+): aspartate 217, glutamate 221, glutamate 389, and glutamate 393. Substrate is bound at residue serine 414.

Belongs to the ketol-acid reductoisomerase family. The cofactor is Mg(2+).

It carries out the reaction (2R)-2,3-dihydroxy-3-methylbutanoate + NADP(+) = (2S)-2-acetolactate + NADPH + H(+). The enzyme catalyses (2R,3R)-2,3-dihydroxy-3-methylpentanoate + NADP(+) = (S)-2-ethyl-2-hydroxy-3-oxobutanoate + NADPH + H(+). It functions in the pathway amino-acid biosynthesis; L-isoleucine biosynthesis; L-isoleucine from 2-oxobutanoate: step 2/4. It participates in amino-acid biosynthesis; L-valine biosynthesis; L-valine from pyruvate: step 2/4. Its function is as follows. Involved in the biosynthesis of branched-chain amino acids (BCAA). Catalyzes an alkyl-migration followed by a ketol-acid reduction of (S)-2-acetolactate (S2AL) to yield (R)-2,3-dihydroxy-isovalerate. In the isomerase reaction, S2AL is rearranged via a Mg-dependent methyl migration to produce 3-hydroxy-3-methyl-2-ketobutyrate (HMKB). In the reductase reaction, this 2-ketoacid undergoes a metal-dependent reduction by NADPH to yield (R)-2,3-dihydroxy-isovalerate. The polypeptide is Ketol-acid reductoisomerase (NADP(+)) (Shewanella amazonensis (strain ATCC BAA-1098 / SB2B)).